The chain runs to 431 residues: Adenylosuccinate synthetase (431 aa).

Residues 12–18 (GDEGKGK) and 40–42 (GHT) each bind GTP. Residue Asp13 is the Proton acceptor of the active site. Residues Asp13 and Gly40 each coordinate Mg(2+). IMP contacts are provided by residues 13–16 (DEGK), 38–41 (NAGH), Thr128, Arg142, Gln225, Thr240, and Arg304. Residue His41 is the Proton donor of the active site. A substrate-binding site is contributed by 300–306 (TTTGRPR). GTP-binding positions include Arg306, 332–334 (KLD), and 414–416 (GVG).

Belongs to the adenylosuccinate synthetase family. In terms of assembly, homodimer. It depends on Mg(2+) as a cofactor.

It is found in the cytoplasm. The enzyme catalyses IMP + L-aspartate + GTP = N(6)-(1,2-dicarboxyethyl)-AMP + GDP + phosphate + 2 H(+). Its pathway is purine metabolism; AMP biosynthesis via de novo pathway; AMP from IMP: step 1/2. In terms of biological role, plays an important role in the de novo pathway of purine nucleotide biosynthesis. Catalyzes the first committed step in the biosynthesis of AMP from IMP. The protein is Adenylosuccinate synthetase of Thermomicrobium roseum (strain ATCC 27502 / DSM 5159 / P-2).